The following is a 144-amino-acid chain: Ribonuclease H (144 aa).

The 141-residue stretch at 1–141 (MDKIDIYSDG…ADALANRGVE (141 aa)) folds into the RNase H type-1 domain. Aspartate 9, glutamate 47, aspartate 69, and aspartate 133 together coordinate Mg(2+).

The protein belongs to the RNase H family. Monomer. The cofactor is Mg(2+).

Its subcellular location is the cytoplasm. It carries out the reaction Endonucleolytic cleavage to 5'-phosphomonoester.. In terms of biological role, endonuclease that specifically degrades the RNA of RNA-DNA hybrids. In Janthinobacterium sp. (strain Marseille) (Minibacterium massiliensis), this protein is Ribonuclease H.